The chain runs to 415 residues: Elongation factor 1-gamma 1 (415 aa).

N-acetylserine is present on S2. Residues 2–78 (SQGTLYANFR…YLVKLSQDDK (77 aa)) enclose the GST N-terminal domain. T32 carries the post-translational modification Phosphothreonine. The GST C-terminal domain maps to 89 to 215 (DLNAQAQIIR…KDFKFADKPL (127 aa)). Positions 212-256 (DKPLSPPQKKKEKKAPAAAPAASKKKEEAKPAATETETSSKKPKH) are disordered. The EF-1-gamma C-terminal domain maps to 254–415 (PKHPLELLGK…KEIVDGKVLK (162 aa)).

As to quaternary structure, the eukaryotic elongation factor 1 complex (eEF1) is probably a heterohexamer. Two trimeric complexes, each composed of eEF1A (TEF1 or TEF2), eEF1Balpha (EFB1) and eEF1Bgamma (CAM1 or TEF4), are probably dimerized via the eF1Bgamma subunits. The eEF1B subcomplex with the GEF activity is formed of eEF1Balpha and eEF1Bgamma. CAM1 interacts with EFB1. Component of a complex bound to MXR1 promoter region.

The protein resides in the cytoplasm. It is found in the nucleus. It functions in the pathway protein biosynthesis; polypeptide chain elongation. Subunit of the eukaryotic elongation factor 1 complex (eEF1). Probably plays a role in anchoring the complex to other cellular components. May be involved in transcriptional regulation of MXR1. The polypeptide is Elongation factor 1-gamma 1 (CAM1) (Saccharomyces cerevisiae (strain ATCC 204508 / S288c) (Baker's yeast)).